A 3914-amino-acid polypeptide reads, in one-letter code: Trichosetin synthetase PKS-NRPS1 (3914 aa).

Residues 4–420 (NEPIAIIGSA…GTNAHAIIEA (417 aa)) enclose the Ketosynthase family 3 (KS3) domain. Residues Cys-177, His-301, and His-340 each act as for beta-ketoacyl synthase activity in the active site. The malonyl-CoA:ACP transacylase (MAT) domain stretch occupies residues 525-847 (VLTGQGAQWP…REKDDIQQFA (323 aa)). The segment at 913-1047 (HPILGRRCHD…AHVKASLSVP (135 aa)) is N-terminal hotdog fold. The interval 913–1214 (HPILGRRCHD…MELVPFSPAT (302 aa)) is dehydratase (DH) domain. Positions 913 to 1216 (HPILGRRCHD…LVPFSPATPE (304 aa)) constitute a PKS/mFAS DH domain. His-946 (proton acceptor; for dehydratase activity) is an active-site residue. Residues 1062–1216 (LRKVEVDRFY…LVPFSPATPE (155 aa)) are C-terminal hotdog fold. Asp-1122 (proton donor; for dehydratase activity) is an active-site residue. Residues 1364–1593 (EGFGLDLVNK…DLPETKSTEL (230 aa)) are methyltransferase (MT) domain. The ketoreductase (KR) domain stretch occupies residues 2083 to 2255 (TFLLIGLSGE…VAASSIDISS (173 aa)). The 81-residue stretch at 2356–2436 (LADVKTKADA…DLIEESLNLI (81 aa)) folds into the Carrier 1 domain. At Ser-2396 the chain carries O-(pantetheine 4'-phosphoryl)serine. Positions 2447–2518 (EAGSTPTTQP…DSTDNSTPLK (72 aa)) are disordered. Polar residues predominate over residues 2481–2500 (QQTGSDSSRSPIDTPLTSME). The interval 2529–2956 (SYGQAGFWFL…VQGTNKAADT (428 aa)) is condensation (C) domain. The tract at residues 2991-3388 (QTIQANSTKV…LLFCDGRLED (398 aa)) is adenylation (A) (KR) domain. Positions 3502–3579 (GTLTVAEQRL…TMAVVLESCG (78 aa)) constitute a Carrier 2 domain. The residue at position 3539 (Ser-3539) is an O-(pantetheine 4'-phosphoryl)serine. Residues 3615-3831 (LTGSAGYLGR…VLPTGDIVKA (217 aa)) are reductase (RED) domain.

The protein in the C-terminal section; belongs to the NRP synthetase family.

It carries out the reaction L-serine + 7 malonyl-CoA + acetyl-CoA + 2 S-adenosyl-L-methionine + ATP + 8 NADPH + 11 H(+) = (5S)-3-[(2E,6R,8E,10E,12E)-2,6-dimethyltetradeca-2,8,10,12-tetraenoyl]-5-(hydroxymethyl)pyrrolidine-2,4-dione + AMP + 2 S-adenosyl-L-homocysteine + 7 CO2 + diphosphate + 8 NADP(+) + 8 CoA + 6 H2O. Its pathway is mycotoxin biosynthesis. Functionally, hybrid PKS-NRPS synthetase; part of the gene cluster that mediates the biosynthesis of trichosetin, a trans-fused decalin-containing tetramic acid with antimicrobial activity. The PKS module of PKS-NRPS1 together with the enoylreductase (ER) catalyze the formation of the polyketide unit which is then conjugated to L-serine by the condensation domain of the PKS-NRPS1 NRPS module. Activity of the Dieckmann cyclase domain (RED) results in release of the Dieckmann product intermediate. Diels-Alderase (DA) is involved in endo-selective Diels-Alder cycloaddition to form the decalin ring, leading to the production of N-desmethylequisetin also called trichosetin. The cluster does not contain the equisetin N-methyltransferase and consequently, trichosetin is isolated as final product. The sequence is that of Trichosetin synthetase PKS-NRPS1 from Gibberella fujikuroi (strain CBS 195.34 / IMI 58289 / NRRL A-6831) (Bakanae and foot rot disease fungus).